Here is a 299-residue protein sequence, read N- to C-terminus: Taste receptor type 2 member 1 (299 aa).

Residues 1–9 (MLESHLIIY) are Extracellular-facing. The chain crosses the membrane as a helical span at residues 10 to 30 (FLLAVIQFLLGIFTNGIIVVV). Over 31 to 55 (NGIDLIKHRKMAPLDLLLSCLAVSR) the chain is Cytoplasmic. Residues 56–76 (IFLQLFIFYVNVIVIFFIEFI) traverse the membrane as a helical segment. The Extracellular portion of the chain corresponds to 77 to 81 (MCSAN). A helical membrane pass occupies residues 82–102 (CAILLFINELELWLATWLGVF). Topologically, residues 103-124 (YCAKVASVRHPLFXWLKMRISK) are cytoplasmic. Residues 125 to 145 (LVPWMILGSLLYVSMICVFHS) form a helical membrane-spanning segment. Residues 146-178 (KYAGFMVPYFLRNFFSQNTTIQKEDTLAIQIFS) are Extracellular-facing. N-linked (GlcNAc...) asparagine glycosylation is present at asparagine 163. A helical transmembrane segment spans residues 179 to 199 (FVAEFSVPLLIFLVAVLLLIF). The Cytoplasmic segment spans residues 200–222 (SLGRHTRQMRNTVAGSRVPGRGA). The helical transmembrane segment at 223-243 (PISALLSILSFLILYFSHCMI) threads the bilayer. The Extracellular segment spans residues 244 to 257 (KVFLSSLKFHIRRF). A helical transmembrane segment spans residues 258 to 278 (IFLFFILVIGIYPSGHSLILI). At 279 to 299 (LGNPKLKQNAKKFLLHSKCCQ) the chain is on the cytoplasmic side.

This sequence belongs to the G-protein coupled receptor T2R family.

The protein resides in the membrane. In terms of biological role, receptor that may play a role in the perception of bitterness and is gustducin-linked. May play a role in sensing the chemical composition of the gastrointestinal content. The activity of this receptor may stimulate alpha gustducin, mediate PLC-beta-2 activation and lead to the gating of TRPM5. The sequence is that of Taste receptor type 2 member 1 (TAS2R1) from Gorilla gorilla gorilla (Western lowland gorilla).